The primary structure comprises 156 residues: Enhancer of split M1 protein (156 aa).

Residues 1–19 form the signal peptide; that stretch reads MMSQTLTLCCLGLVACVYG. Kazal-like domains lie at 23 to 81 and 96 to 156; these read STND…AWCS and KLEV…EEKC. Intrachain disulfides connect Cys-29-Cys-62, Cys-33-Cys-55, Cys-102-Cys-135, Cys-106-Cys-128, and Cys-114-Cys-156.

The protein is Enhancer of split M1 protein of Drosophila simulans (Fruit fly).